A 150-amino-acid polypeptide reads, in one-letter code: 3-hydroxyacyl-[acyl-carrier-protein] dehydratase FabZ (150 aa).

Histidine 51 is a catalytic residue.

The protein belongs to the thioester dehydratase family. FabZ subfamily.

It is found in the cytoplasm. It carries out the reaction a (3R)-hydroxyacyl-[ACP] = a (2E)-enoyl-[ACP] + H2O. In terms of biological role, involved in unsaturated fatty acids biosynthesis. Catalyzes the dehydration of short chain beta-hydroxyacyl-ACPs and long chain saturated and unsaturated beta-hydroxyacyl-ACPs. The sequence is that of 3-hydroxyacyl-[acyl-carrier-protein] dehydratase FabZ from Geobacter sulfurreducens (strain ATCC 51573 / DSM 12127 / PCA).